The chain runs to 82 residues: UPF0180 protein BC_1394 (82 aa).

It belongs to the UPF0180 family.

The chain is UPF0180 protein BC_1394 from Bacillus cereus (strain ATCC 14579 / DSM 31 / CCUG 7414 / JCM 2152 / NBRC 15305 / NCIMB 9373 / NCTC 2599 / NRRL B-3711).